The chain runs to 659 residues: Centrosomal protein of 76 kDa (659 aa).

Ser75 and Ser83 each carry phosphoserine.

This sequence belongs to the CEP76 family. In terms of assembly, interacts with CCP110 and CEP97.

Its subcellular location is the cytoplasm. The protein localises to the cytoskeleton. It is found in the microtubule organizing center. It localises to the centrosome. The protein resides in the centriole. In terms of biological role, centrosomal protein involved in regulation of centriole duplication. Required to limit centriole duplication to once per cell cycle by preventing centriole reduplication. The sequence is that of Centrosomal protein of 76 kDa (CEP76) from Homo sapiens (Human).